Reading from the N-terminus, the 1292-residue chain is Zinc finger CCCH domain-containing protein 44 (1292 aa).

A compositionally biased stretch (polar residues) spans 1–10 (MENQQKQLQQ). 2 disordered regions span residues 1–24 (MENQ…REES) and 72–107 (IDEA…KKED). A PHD-type zinc finger spans residues 110–176 (EDVCFICFDG…SYMCYTCTFS (67 aa)). Disordered stretches follow at residues 256–313 (PWKE…LKKA) and 401–426 (KGAK…VHDP). In terms of domain architecture, SWIB/MDM2 spans 313–396 (APGDTSWATK…LKLLESHVLI (84 aa)). Positions 404 to 414 (KTTNGETTHAV) are enriched in polar residues. The Plus3 domain maps to 453 to 586 (AIDVHNINLI…TAATLQAMRI (134 aa)). Disordered stretches follow at residues 624–731 (PEVH…TQGP), 777–832 (TTLP…SNDP), 876–915 (DVRE…INGS), and 1170–1245 (TTVE…HNNR). The segment covering 661-675 (QNKGVNLNNVGNNVQ) has biased composition (low complexity). Basic and acidic residues predominate over residues 689 to 698 (VHADKDDCSK). Residues 699-708 (VHNNSSNIQE) show a composition bias toward polar residues. In terms of domain architecture, GYF spans 716–770 (SEIWHYRDPTGKTQGPFSMVQLRRWKSSGHFPPYLRIWRAHENQDESVLLTDALA). The segment covering 813–829 (VNTSATSSSSSTVTAHS) has biased composition (low complexity). Polar residues-rich tracts occupy residues 882–899 (GTDQ…NTTK) and 906–915 (NGGSVSINGS). 2 stretches are compositionally biased toward low complexity: residues 1188 to 1206 (SSEP…SARG) and 1231 to 1244 (NNGH…SHNN). The C3H1-type zinc finger occupies 1267-1292 (PKGLKICKFYESGYCKRGASCSFWHP).

The sequence is that of Zinc finger CCCH domain-containing protein 44 from Arabidopsis thaliana (Mouse-ear cress).